The primary structure comprises 161 residues: Cytochrome c-type biogenesis protein CcmE (161 aa).

Residues 1–8 are Cytoplasmic-facing; the sequence is MNARRKKR. A helical; Signal-anchor for type II membrane protein membrane pass occupies residues 9–29; sequence LALATALIGGVAAIASLLLYA. Residues 30-161 are Periplasmic-facing; it reads LNSNLNLFYT…DYNAEQKSGY (132 aa). Positions 131 and 135 each coordinate heme.

Belongs to the CcmE/CycJ family.

Its subcellular location is the cell inner membrane. In terms of biological role, heme chaperone required for the biogenesis of c-type cytochromes. Transiently binds heme delivered by CcmC and transfers the heme to apo-cytochromes in a process facilitated by CcmF and CcmH. This chain is Cytochrome c-type biogenesis protein CcmE, found in Shewanella woodyi (strain ATCC 51908 / MS32).